The sequence spans 296 residues: tRNA pseudouridine synthase B (296 aa).

The Nucleophile role is filled by D38.

Belongs to the pseudouridine synthase TruB family. Type 1 subfamily.

The catalysed reaction is uridine(55) in tRNA = pseudouridine(55) in tRNA. Responsible for synthesis of pseudouridine from uracil-55 in the psi GC loop of transfer RNAs. This is tRNA pseudouridine synthase B from Synechocystis sp. (strain ATCC 27184 / PCC 6803 / Kazusa).